The following is a 648-amino-acid chain: MGTNPVHGLPFLPGSSFTDSTKTAFHRSQTLNYRNGYAVVRRPTMGIGGDRLHYNQLSQAELDELANKAPILTYGPLKQAPLAEFVPAHVAFDKKVLKFSAYFQEDVPISMEEHYRIRHVNIYYYLEDDSMSVIEPVVENSGIPQGKLIKRQRFTKNDMGDHYHWKDLNRGINLTVYGKTFRIVDCDRFTQDFLESQGIELNPSEKIPLDPYTQLRKEPVRKYVTPSDFDQLKQFLTFDKQVLRFYAIWDDTDSLFGECRHYIIHYYLMDDTVEIREVHERNNGRDPFPLLMNRQRMPKVLVENAKNFPKCVLEISDQEVLEWYTAKDFIVGKPLTILGRTFFIYDCDPFTRQFYKDKFGMPDLPPVDVTKKEPPPVKQELPPYNGYGLIEDSAQNCFALIPKAPRKDVVKMLMNDNKVLRYLAALESPIPEDKDRRFVFSYFLATDMISIFEPPVRNSGIIGGKFLGRTKVVKSFSPVDNPIYYSPSDFFIGAVIEVFGHRFVILDTDEYVLKYMESNASQYSPEALASIQNRIQKPELPAPELESKQATGEPMVQGTEESKVQDLDALIDQIHMHLKYNSYKENLRETFQMYDKDESGYVDRETFFKICETLNVPVDDSLIKELIRLCTHGEGRINYYNFVRAFSN.

The tract at residues 1 to 45 (MGTNPVHGLPFLPGSSFTDSTKTAFHRSQTLNYRNGYAVVRRPTM) is required for its localization in the mitotic spindle and interaction with alpha-tubulin. 3 consecutive DM10 domains span residues 93-198 (DKKV…ESQG), 239-359 (DKQV…KDKF), and 416-520 (DNKV…ESNA). One can recognise an EF-hand domain in the interval 582-617 (SYKENLRETFQMYDKDESGYVDRETFFKICETLNVP).

In terms of assembly, microtubule inner protein component of sperm flagellar doublet microtubules. Interacts with the C-terminus of CACNA1E. Interacts with alpha-tubulin. Expressed in adult brain including hippocampus, cerebellum, cerebral cortex, thalamus, hypothalamus, amygdala and upper brainstem. Expressed in soma and dentrites of pyramidal neurons of the hippocampal CA1 region, pyramidal neurons of the cerebral cortex and Purkinje cells of cerebellum. Highly expressed in testis, trachea, and oviduct, moderately in lung, and slightly in brain. Highly expressed in sperm flagella and tracheal cilia (at protein level).

It localises to the cytoplasm. Its subcellular location is the cytoskeleton. The protein resides in the cilium axoneme. It is found in the flagellum axoneme. The protein localises to the microtubule organizing center. It localises to the centrosome. Its subcellular location is the spindle. The protein resides in the spindle pole. Functionally, microtubule inner protein (MIP) part of the dynein-decorated doublet microtubules (DMTs) in cilia axoneme, which is required for motile cilia beating. Microtubule-associated protein which regulates cell division and neuronal migration during cortical development. Necessary for radial and tangential cell migration during brain development, possibly acting as a regulator of cell morphology and process formation during migration. May enhance calcium influx through CACNA1E and stimulate programmed cell death. Overexpression of EFHC1 in hippocampal primary culture neurons induced apoptosis. The polypeptide is EF-hand domain-containing protein 1 (Efhc1) (Mus musculus (Mouse)).